We begin with the raw amino-acid sequence, 174 residues long: Peptide deformylase (174 aa).

The Fe cation site is built by cysteine 94 and histidine 136. The active site involves glutamate 137. Histidine 140 provides a ligand contact to Fe cation.

The protein belongs to the polypeptide deformylase family. Requires Fe(2+) as cofactor.

The enzyme catalyses N-terminal N-formyl-L-methionyl-[peptide] + H2O = N-terminal L-methionyl-[peptide] + formate. Removes the formyl group from the N-terminal Met of newly synthesized proteins. Requires at least a dipeptide for an efficient rate of reaction. N-terminal L-methionine is a prerequisite for activity but the enzyme has broad specificity at other positions. The sequence is that of Peptide deformylase from Maricaulis maris (strain MCS10) (Caulobacter maris).